A 337-amino-acid chain; its full sequence is Glyceraldehyde-3-phosphate dehydrogenase (337 aa).

Residues 11–12 (TI) and glycine 111 contribute to the NAD(+) site. 140–142 (SCN) contacts D-glyceraldehyde 3-phosphate. Cysteine 141 (nucleophile) is an active-site residue. NAD(+) is bound at residue arginine 169. Residues 177 to 196 (KKGPINSIVPTTEVPSHHGP) form a disordered region. 194–195 (HG) contributes to the D-glyceraldehyde 3-phosphate binding site. An NAD(+)-binding site is contributed by glutamine 301.

The protein belongs to the glyceraldehyde-3-phosphate dehydrogenase family. As to quaternary structure, homotetramer.

The protein resides in the cytoplasm. It carries out the reaction D-glyceraldehyde 3-phosphate + phosphate + NADP(+) = (2R)-3-phospho-glyceroyl phosphate + NADPH + H(+). The enzyme catalyses D-glyceraldehyde 3-phosphate + phosphate + NAD(+) = (2R)-3-phospho-glyceroyl phosphate + NADH + H(+). The protein operates within carbohydrate degradation; glycolysis; pyruvate from D-glyceraldehyde 3-phosphate: step 1/5. This Methanosphaera stadtmanae (strain ATCC 43021 / DSM 3091 / JCM 11832 / MCB-3) protein is Glyceraldehyde-3-phosphate dehydrogenase.